The primary structure comprises 112 residues: Nitrogen regulatory protein P-II (112 aa).

Y51 bears the O-UMP-tyrosine mark.

The protein belongs to the P(II) protein family. As to quaternary structure, homotrimer.

In terms of biological role, P-II indirectly controls the transcription of the glutamine synthetase gene (glnA). P-II prevents NR-II-catalyzed conversion of NR-I to NR-I-phosphate, the transcriptional activator of glnA. When P-II is uridylylated to P-II-UMP, these events are reversed. When the ratio of Gln to 2-ketoglutarate decreases, P-II is uridylylated to P-II-UMP, which causes the deadenylation of glutamine synthetase, so activating the enzyme. The polypeptide is Nitrogen regulatory protein P-II (glnB) (Rhodobacter capsulatus (Rhodopseudomonas capsulata)).